The following is a 92-amino-acid chain: Acylphosphatase (92 aa).

The region spanning 4-92 (AVQLDVFGRV…SACHKFSVVG (89 aa)) is the Acylphosphatase-like domain. Residues Arg-19 and Asn-37 contribute to the active site.

The protein belongs to the acylphosphatase family.

It catalyses the reaction an acyl phosphate + H2O = a carboxylate + phosphate + H(+). The polypeptide is Acylphosphatase (acyP) (Latilactobacillus sakei subsp. sakei (strain 23K) (Lactobacillus sakei subsp. sakei)).